Reading from the N-terminus, the 353-residue chain is Cruciform cutting endonuclease 1, mitochondrial (353 aa).

The Mg(2+) site is built by Asp293 and Asp294.

In terms of assembly, homodimer. Mg(2+) serves as cofactor.

The protein localises to the mitochondrion. The enzyme catalyses Endonucleolytic cleavage at a junction such as a reciprocal single-stranded crossover between two homologous DNA duplexes (Holliday junction).. Its function is as follows. Capable of resolving Holliday junctions. Specific for 4-way junctions. Seems to be important for the maintenance of mitochondrial DNA. Cleaves fixed junctions at the point of strand exchange. Cleaves after 5'-CT-3' sequence. This chain is Cruciform cutting endonuclease 1, mitochondrial (CCE1), found in Saccharomyces cerevisiae (strain ATCC 204508 / S288c) (Baker's yeast).